The chain runs to 152 residues: Xanthine-guanine phosphoribosyltransferase (152 aa).

5-phospho-alpha-D-ribose 1-diphosphate-binding positions include 37–38 (RG), R69, and 88–96 (DDLVDTGGT). A GMP-binding site is contributed by R69. D89 provides a ligand contact to Mg(2+). D92 and I135 together coordinate guanine. Positions 92 and 135 each coordinate xanthine. GMP is bound by residues 92–96 (DTGGT) and 134–135 (WI).

The protein belongs to the purine/pyrimidine phosphoribosyltransferase family. XGPT subfamily. In terms of assembly, homotetramer. The cofactor is Mg(2+).

It localises to the cell inner membrane. The catalysed reaction is GMP + diphosphate = guanine + 5-phospho-alpha-D-ribose 1-diphosphate. It carries out the reaction XMP + diphosphate = xanthine + 5-phospho-alpha-D-ribose 1-diphosphate. The enzyme catalyses IMP + diphosphate = hypoxanthine + 5-phospho-alpha-D-ribose 1-diphosphate. It participates in purine metabolism; GMP biosynthesis via salvage pathway; GMP from guanine: step 1/1. The protein operates within purine metabolism; XMP biosynthesis via salvage pathway; XMP from xanthine: step 1/1. Functionally, purine salvage pathway enzyme that catalyzes the transfer of the ribosyl-5-phosphate group from 5-phospho-alpha-D-ribose 1-diphosphate (PRPP) to the N9 position of the 6-oxopurines guanine and xanthine to form the corresponding ribonucleotides GMP (guanosine 5'-monophosphate) and XMP (xanthosine 5'-monophosphate), with the release of PPi. To a lesser extent, also acts on hypoxanthine. This is Xanthine-guanine phosphoribosyltransferase from Photobacterium profundum (strain SS9).